The primary structure comprises 451 residues: Tubulin beta chain (451 aa).

Residues Gln-11, Glu-69, Ser-138, Gly-142, Thr-143, Gly-144, Asn-204, and Asn-226 each contribute to the GTP site. Glu-69 lines the Mg(2+) pocket. Residues 426–451 (QDATAEEEGEFDENEGAEGEEQPADY) form a disordered region. Residues 429-451 (TAEEEGEFDENEGAEGEEQPADY) show a composition bias toward acidic residues.

The protein belongs to the tubulin family. In terms of assembly, dimer of alpha and beta chains. A typical microtubule is a hollow water-filled tube with an outer diameter of 25 nm and an inner diameter of 15 nM. Alpha-beta heterodimers associate head-to-tail to form protofilaments running lengthwise along the microtubule wall with the beta-tubulin subunit facing the microtubule plus end conferring a structural polarity. Microtubules usually have 13 protofilaments but different protofilament numbers can be found in some organisms and specialized cells. Requires Mg(2+) as cofactor.

It localises to the cytoplasm. The protein localises to the cytoskeleton. Functionally, tubulin is the major constituent of microtubules, a cylinder consisting of laterally associated linear protofilaments composed of alpha- and beta-tubulin heterodimers. Microtubules grow by the addition of GTP-tubulin dimers to the microtubule end, where a stabilizing cap forms. Below the cap, tubulin dimers are in GDP-bound state, owing to GTPase activity of alpha-tubulin. The sequence is that of Tubulin beta chain from Naegleria pringsheimi (Amoeba).